The primary structure comprises 131 residues: Arsenate reductase (131 aa).

Residues Cys10, Cys82, and Cys89 each act as nucleophile in the active site. 2 cysteine pairs are disulfide-bonded: Cys10–Cys82 and Cys82–Cys89.

This sequence belongs to the low molecular weight phosphotyrosine protein phosphatase family. Thioredoxin-coupled ArsC subfamily.

It is found in the cytoplasm. The catalysed reaction is arsenate + [thioredoxin]-dithiol + H(+) = arsenite + [thioredoxin]-disulfide + H2O. In terms of biological role, catalyzes the reduction of arsenate [As(V)] to arsenite [As(III)]. The protein is Arsenate reductase of Staphylococcus aureus (strain N315).